The chain runs to 192 residues: Cytidylate kinase (192 aa).

12 to 20 (GLAGSGTTT) lines the ATP pocket.

It belongs to the cytidylate kinase family. Type 2 subfamily.

It localises to the cytoplasm. It catalyses the reaction CMP + ATP = CDP + ADP. The catalysed reaction is dCMP + ATP = dCDP + ADP. In Pyrococcus furiosus (strain ATCC 43587 / DSM 3638 / JCM 8422 / Vc1), this protein is Cytidylate kinase.